A 76-amino-acid chain; its full sequence is DNA-directed RNA polymerase subunit epsilon (76 aa).

The protein belongs to the RNA polymerase subunit epsilon family. In terms of assembly, RNAP is composed of a core of 2 alpha, a beta and a beta' subunit. The core is associated with a delta subunit, and at least one of epsilon or omega. When a sigma factor is associated with the core the holoenzyme is formed, which can initiate transcription.

The catalysed reaction is RNA(n) + a ribonucleoside 5'-triphosphate = RNA(n+1) + diphosphate. Functionally, a non-essential component of RNA polymerase (RNAP). This Lactococcus lactis subsp. lactis (strain IL1403) (Streptococcus lactis) protein is DNA-directed RNA polymerase subunit epsilon.